The sequence spans 209 residues: Ion-translocating oxidoreductase complex subunit G (209 aa).

Residues 9 to 29 (GLILAVFACVSTGLVALTYAL) traverse the membrane as a helical segment. Thr-175 is subject to FMN phosphoryl threonine.

The protein belongs to the RnfG family. The complex is composed of six subunits: RnfA, RnfB, RnfC, RnfD, RnfE and RnfG. Requires FMN as cofactor.

It is found in the cell inner membrane. In terms of biological role, part of a membrane-bound complex that couples electron transfer with translocation of ions across the membrane. In Vibrio cholerae serotype O1 (strain ATCC 39315 / El Tor Inaba N16961), this protein is Ion-translocating oxidoreductase complex subunit G.